Here is a 592-residue protein sequence, read N- to C-terminus: MTARGKIVWVSGPAVKADGMSEAKMYETVTVGEARLIGEVIRLTGDVAFIQVYESTSGLKPGEPVEGTGNPLSVLLGPGIIGQIYDGIQRPLKELSKKSGSFIGRGITTSPVDMTKKYHFVPSVSVGDDVIPGTVIGTVKETDLIDHSIMVPPDHAGGKIKSIVSEGEYDLETEMAGIEKDGKTIPLKMYHRWPVRQPRSYHTKYDPTVPLITGQRVIDTFFPIAKGGTGSIPGGFGTGKTVTLHQIAKWADSQVVVYIGCGERGNEMTEVLVEFPHLKDPRTDKPLMDRTVLVANTSNMPVAAREASIYTGVTIAEYYRDMGKDVVLVADSTSRWAEALREMSGRLEEMPAEEGYPSYLASRLAEFYERAGRVRALGSPERNGSVTLVGAVSPSGGDFTEPVTTHTMRFIKTFWALDAKLAYSRHYPSINWMNSYSGYLADIAKWWGENVSKDWLDTRSEAYGILQREDTLKEIVRLLGPEALPDEEKLILEVARMMKIGLLQQNSFDDVDTYCSPEKQYKLLKMQVDFYKRGQQALKEGAELADIRAMPVISGLLKAKMDIKDDEMPKLDELAGAMDEQYKGITGVKVAS.

An ATP-binding site is contributed by glycine 234–threonine 241.

This sequence belongs to the ATPase alpha/beta chains family. Has multiple subunits with at least A(3), B(3), C, D, E, F, H, I and proteolipid K(x).

It is found in the cell membrane. It carries out the reaction ATP + H2O + 4 H(+)(in) = ADP + phosphate + 5 H(+)(out). Its function is as follows. Component of the A-type ATP synthase that produces ATP from ADP in the presence of a proton gradient across the membrane. The A chain is the catalytic subunit. The protein is A-type ATP synthase subunit A of Cenarchaeum symbiosum (strain A).